Reading from the N-terminus, the 532-residue chain is Fe-S cluster assembly factor HCF101, chloroplastic (532 aa).

Residues 1–61 (MPLLHPQSLR…RVSQNLSVAK (61 aa)) constitute a chloroplast transit peptide. Ala-62 is subject to N-acetylalanine. Residue 184 to 191 (CKGGVGKS) participates in ATP binding.

The protein belongs to the Mrp/NBP35 ATP-binding proteins family. Requires [4Fe-4S] cluster as cofactor. Expressed in aerial tissues exposed to light. Very low expression in roots.

The protein resides in the plastid. Its subcellular location is the chloroplast stroma. Required for photosystem I (PSI) biosynthesis and assembly. May serve as a chloroplast scaffold protein that specifically assembles iron-sulfur (4Fe-4S) clusters and transfers them to the chloroplast PSI and ferredoxin-thioredoxin (FTR) complexes. Can assemble a 4Fe-4S cluster and transfer it to apoproteins in yeast cells. Probably not required for assembly or stability of plastidic 2Fe-2S clusters. This chain is Fe-S cluster assembly factor HCF101, chloroplastic (HCF101), found in Arabidopsis thaliana (Mouse-ear cress).